The primary structure comprises 1423 residues: DNA-directed RNA polymerase subunit beta' (1423 aa).

The Zn(2+) site is built by C71, C73, C86, and C89. Residues D461, D463, and D465 each contribute to the Mg(2+) site. Zn(2+)-binding residues include C815, C889, C896, and C899.

It belongs to the RNA polymerase beta' chain family. The RNAP catalytic core consists of 2 alpha, 1 beta, 1 beta' and 1 omega subunit. When a sigma factor is associated with the core the holoenzyme is formed, which can initiate transcription. Requires Mg(2+) as cofactor. The cofactor is Zn(2+).

The catalysed reaction is RNA(n) + a ribonucleoside 5'-triphosphate = RNA(n+1) + diphosphate. DNA-dependent RNA polymerase catalyzes the transcription of DNA into RNA using the four ribonucleoside triphosphates as substrates. The protein is DNA-directed RNA polymerase subunit beta' of Actinobacillus pleuropneumoniae serotype 7 (strain AP76).